Reading from the N-terminus, the 29-residue chain is Dermaseptin-S5 (29 aa).

This sequence belongs to the frog skin active peptide (FSAP) family. Dermaseptin subfamily. As to expression, expressed by the skin glands.

Its subcellular location is the secreted. Potent antimicrobial peptide with activity against bacteria and protozoa. Also has activity against fungi. Probably acts by disturbing membrane functions with its amphipathic structure. The protein is Dermaseptin-S5 of Phyllomedusa sauvagei (Sauvage's leaf frog).